Reading from the N-terminus, the 479-residue chain is Anaerobic nitric oxide reductase flavorubredoxin (479 aa).

The segment at 30-210 (LRGSSYNSYL…PFSRLVTPKI (181 aa)) is zinc metallo-hydrolase. The Fe cation site is built by histidine 79, glutamate 81, aspartate 83, histidine 147, aspartate 166, and histidine 227. The Flavodoxin-like domain maps to 254–393 (ITIVYDTMSN…LCREHGREIA (140 aa)). FMN contacts are provided by residues 260–264 (TMSNN) and 342–369 (AFGS…EMSL). One can recognise a Rubredoxin-like domain in the interval 423–474 (GPRMQCSVCQWIYDPAKGEPMQDVAPGTPWSEVPDNFLCPECSLGKDVFDEL). Residues cysteine 428, cysteine 431, cysteine 461, and cysteine 464 each coordinate Fe cation.

The protein in the N-terminal section; belongs to the zinc metallo-hydrolase group 3 family. As to quaternary structure, homotetramer. The cofactor is Fe cation. FMN serves as cofactor.

It localises to the cytoplasm. The protein operates within nitrogen metabolism; nitric oxide reduction. Its function is as follows. Anaerobic nitric oxide reductase; uses NADH to detoxify nitric oxide (NO), protecting several 4Fe-4S NO-sensitive enzymes. Has at least 2 reductase partners, only one of which (NorW, flavorubredoxin reductase) has been identified. NO probably binds to the di-iron center; electrons enter from the NorW at rubredoxin and are transferred sequentially to the FMN center and the di-iron center. Also able to function as an aerobic oxygen reductase. The sequence is that of Anaerobic nitric oxide reductase flavorubredoxin from Escherichia coli (strain UTI89 / UPEC).